Consider the following 122-residue polypeptide: Basic phospholipase A2 homolog (122 aa).

7 disulfides stabilise this stretch: Cys-26/Cys-115, Cys-28/Cys-44, Cys-43/Cys-95, Cys-49/Cys-122, Cys-50/Cys-88, Cys-57/Cys-81, and Cys-75/Cys-86. The interval 105–117 (KRYMTYPNILCSS) is important for membrane-damaging activities in eukaryotes and bacteria; heparin-binding.

It belongs to the phospholipase A2 family. Group II subfamily. N49 sub-subfamily. Expressed by the venom gland.

It is found in the secreted. This chain is Basic phospholipase A2 homolog, found in Gloydius halys (Chinese water mocassin).